The following is a 146-amino-acid chain: Hemoglobin subunit beta-A/B (146 aa).

An N-acetylserine; in variant beta-B modification is found at Gly-1. A Globin domain is found at 2 to 146 (FLTAEEKGLV…VANALAHKYH (145 aa)). Ser-44 bears the Phosphoserine mark. The residue at position 59 (Lys-59) is an N6-acetyllysine. Residue His-63 participates in heme b binding. Lys-82 carries the N6-acetyllysine modification. A heme b-binding site is contributed by His-92. Cys-93 is modified (S-nitrosocysteine). Residue Lys-144 is modified to N6-acetyllysine.

The protein belongs to the globin family. In terms of assembly, heterotetramer of two alpha chains and two beta chains. Red blood cells.

In terms of biological role, involved in oxygen transport from the lung to the various peripheral tissues. This is Hemoglobin subunit beta-A/B (HBB) from Felis catus (Cat).